The chain runs to 909 residues: Protein NLP1 (909 aa).

Disordered regions lie at residues 51–71 (KSLK…DNSP), 536–556 (KEDP…PVPN), 568–605 (ASTP…RAKT), and 690–745 (NSPN…ENTG). The segment covering 55-70 (QTEQSPSASTAMNDNS) has biased composition (polar residues). Positions 595–676 (RRPGEKKRAK…MDSVQGAQGS (82 aa)) constitute an RWP-RK domain. Over residues 690–716 (NSPNMSSNGPSLKSNEQPSHLNAQTDN) the composition is skewed to polar residues. Over residues 725-745 (RSPSSSCSKSSGSSNNNENTG) the composition is skewed to low complexity. The 84-residue stretch at 811–894 (AIKVKATFGE…HTIKISLNEA (84 aa)) folds into the PB1 domain.

It is found in the nucleus. Probable transcription factor. The protein is Protein NLP1 (NLP1) of Arabidopsis thaliana (Mouse-ear cress).